The following is a 308-amino-acid chain: Ribosomal protein L11 methyltransferase (308 aa).

S-adenosyl-L-methionine-binding residues include Thr-148, Gly-169, Asp-191, and Asn-239.

It belongs to the methyltransferase superfamily. PrmA family.

It localises to the cytoplasm. The enzyme catalyses L-lysyl-[protein] + 3 S-adenosyl-L-methionine = N(6),N(6),N(6)-trimethyl-L-lysyl-[protein] + 3 S-adenosyl-L-homocysteine + 3 H(+). Methylates ribosomal protein L11. The sequence is that of Ribosomal protein L11 methyltransferase from Psychrobacter arcticus (strain DSM 17307 / VKM B-2377 / 273-4).